Reading from the N-terminus, the 176-residue chain is 3-hydroxydecanoyl-[acyl-carrier-protein] dehydratase (176 aa).

H71 is an active-site residue.

Belongs to the thioester dehydratase family. FabA subfamily. In terms of assembly, homodimer.

It localises to the cytoplasm. It carries out the reaction a (3R)-hydroxyacyl-[ACP] = a (2E)-enoyl-[ACP] + H2O. It catalyses the reaction (3R)-hydroxydecanoyl-[ACP] = (2E)-decenoyl-[ACP] + H2O. The enzyme catalyses (2E)-decenoyl-[ACP] = (3Z)-decenoyl-[ACP]. Its pathway is lipid metabolism; fatty acid biosynthesis. Necessary for the introduction of cis unsaturation into fatty acids. Catalyzes the dehydration of (3R)-3-hydroxydecanoyl-ACP to E-(2)-decenoyl-ACP and then its isomerization to Z-(3)-decenoyl-ACP. Can catalyze the dehydratase reaction for beta-hydroxyacyl-ACPs with saturated chain lengths up to 16:0, being most active on intermediate chain length. This Rhodopseudomonas palustris (strain HaA2) protein is 3-hydroxydecanoyl-[acyl-carrier-protein] dehydratase.